Consider the following 162-residue polypeptide: MSDKIGLFTGSFDPMTNGHLDIIERASRLFDKLYVGIFFNPHKQGFLPLENRKRGLEKALGHLENVEVVASHDKLVVDVAKRLGATFLVRGLRNAADLQYEASFDYYNHQLSSDIETIYLHSRPEHLYISSSGVRELLKFGQDIACHVPESILEEIRNEKKD.

Ser-11 lines the substrate pocket. ATP-binding positions include 11-12 (SF) and His-19. Substrate-binding residues include Lys-43, Val-76, and Arg-90. Residues 91-93 (GLR), Glu-101, and 126-132 (HLYISSS) each bind ATP.

Belongs to the bacterial CoaD family. Homohexamer. Mg(2+) is required as a cofactor.

The protein localises to the cytoplasm. It carries out the reaction (R)-4'-phosphopantetheine + ATP + H(+) = 3'-dephospho-CoA + diphosphate. Its pathway is cofactor biosynthesis; coenzyme A biosynthesis; CoA from (R)-pantothenate: step 4/5. Reversibly transfers an adenylyl group from ATP to 4'-phosphopantetheine, yielding dephospho-CoA (dPCoA) and pyrophosphate. The polypeptide is Phosphopantetheine adenylyltransferase (Streptococcus pneumoniae (strain Hungary19A-6)).